Reading from the N-terminus, the 833-residue chain is Transmembrane protease serine 7 (833 aa).

The Cytoplasmic portion of the chain corresponds to 1-62 (MDKEKSDPSC…RAPFWNVQNK (62 aa)). The tract at residues 30–49 (KLPGRRLPRKPIGKARPRKQ) is disordered. Positions 32-49 (PGRRLPRKPIGKARPRKQ) are enriched in basic residues. A helical; Signal-anchor for type II membrane protein membrane pass occupies residues 63–83 (IILFTVFLFILAVTAWTLLWL). At 84–829 (YISKTDSKDA…NFVPWIHKYV (746 aa)) the chain is on the extracellular side. Residues 92-220 (DAFYFVGMFR…DSVVLNAGLR (129 aa)) form the SEA domain. A glycan (N-linked (GlcNAc...) asparagine) is linked at Asn196. Disulfide bonds link Cys233–Cys259, Cys285–Cys312, and Cys355–Cys386. CUB domains are found at residues 233–350 (CSQY…FEVI) and 355–471 (CENT…YNIS). N-linked (GlcNAc...) asparagine glycosylation is found at Asn405 and Asn469. LDL-receptor class A domains are found at residues 473 to 509 (PCPAGSFRCSSGLCVPQAQRCDGVNDCFDESDELFCV) and 548 to 585 (PCTNRTFKCGNDICFRKQNAQCDGIVDCPDRSDEEGCG). 7 disulfides stabilise this stretch: Cys474-Cys486, Cys481-Cys499, Cys493-Cys508, Cys549-Cys561, Cys556-Cys575, Cys569-Cys584, and Cys621-Cys637. Residues 596 to 830 (VVGGSDSQEG…FVPWIHKYVP (235 aa)) form the Peptidase S1 domain. Active-site charge relay system residues include His636 and Asp684. Cystine bridges form between Cys720–Cys786, Cys752–Cys765, and Cys776–Cys806. Ser780 functions as the Charge relay system in the catalytic mechanism.

Belongs to the peptidase S1 family. As to quaternary structure, forms a heterodimer with SERPINA5. In terms of processing, N-glycosylated.

The protein resides in the cell membrane. In terms of biological role, serine protease which preferentially hydrolyzes peptides with Arg at the P1 position. The chain is Transmembrane protease serine 7 from Rattus norvegicus (Rat).